A 453-amino-acid polypeptide reads, in one-letter code: GTPase Der (453 aa).

2 EngA-type G domains span residues 4 to 169 and 177 to 352; these read PIVA…PTQG and TKIA…NEYQ. Residues 10–17, 57–61, 120–123, 183–190, 230–234, and 295–298 each bind GTP; these read GRPNVGKS, DTGGL, NKCE, DTAGI, and NKWD. One can recognise a KH-like domain in the interval 353–438; it reads RRVTTSVINE…PIRLLWRGKK (86 aa).

It belongs to the TRAFAC class TrmE-Era-EngA-EngB-Septin-like GTPase superfamily. EngA (Der) GTPase family. Associates with the 50S ribosomal subunit.

In terms of biological role, GTPase that plays an essential role in the late steps of ribosome biogenesis. The polypeptide is GTPase Der (Trichodesmium erythraeum (strain IMS101)).